Consider the following 79-residue polypeptide: ATP synthase subunit c (79 aa).

The next 2 membrane-spanning stretches (helical) occupy residues isoleucine 11–leucine 31 and phenylalanine 53–tyrosine 73.

Belongs to the ATPase C chain family. F-type ATPases have 2 components, F(1) - the catalytic core - and F(0) - the membrane proton channel. F(1) has five subunits: alpha(3), beta(3), gamma(1), delta(1), epsilon(1). F(0) has three main subunits: a(1), b(2) and c(10-14). The alpha and beta chains form an alternating ring which encloses part of the gamma chain. F(1) is attached to F(0) by a central stalk formed by the gamma and epsilon chains, while a peripheral stalk is formed by the delta and b chains.

The protein localises to the cell membrane. Its function is as follows. F(1)F(0) ATP synthase produces ATP from ADP in the presence of a proton or sodium gradient. F-type ATPases consist of two structural domains, F(1) containing the extramembraneous catalytic core and F(0) containing the membrane proton channel, linked together by a central stalk and a peripheral stalk. During catalysis, ATP synthesis in the catalytic domain of F(1) is coupled via a rotary mechanism of the central stalk subunits to proton translocation. Key component of the F(0) channel; it plays a direct role in translocation across the membrane. A homomeric c-ring of between 10-14 subunits forms the central stalk rotor element with the F(1) delta and epsilon subunits. This is ATP synthase subunit c from Buchnera aphidicola subsp. Schizaphis graminum (strain Sg).